The chain runs to 139 residues: Phosphoribosyl-AMP cyclohydrolase (139 aa).

Position 92 (aspartate 92) interacts with Mg(2+). Position 93 (cysteine 93) interacts with Zn(2+). The Mg(2+) site is built by aspartate 94 and aspartate 96. Residues cysteine 111 and cysteine 118 each coordinate Zn(2+).

The protein belongs to the PRA-CH family. Homodimer. The cofactor is Mg(2+). Requires Zn(2+) as cofactor.

It is found in the cytoplasm. The enzyme catalyses 1-(5-phospho-beta-D-ribosyl)-5'-AMP + H2O = 1-(5-phospho-beta-D-ribosyl)-5-[(5-phospho-beta-D-ribosylamino)methylideneamino]imidazole-4-carboxamide. The protein operates within amino-acid biosynthesis; L-histidine biosynthesis; L-histidine from 5-phospho-alpha-D-ribose 1-diphosphate: step 3/9. In terms of biological role, catalyzes the hydrolysis of the adenine ring of phosphoribosyl-AMP. This chain is Phosphoribosyl-AMP cyclohydrolase, found in Caulobacter vibrioides (strain ATCC 19089 / CIP 103742 / CB 15) (Caulobacter crescentus).